A 146-amino-acid polypeptide reads, in one-letter code: MTIKLHHLRPAPGSKTERTRVGRGEGSKGKTAGRGTKGTKARKNVPVTFEGGQMPIHMRLPKLKGFKNRFRTEYQVVNVADIERLFPEGGDVTIEALVAKGAVRKNELVKVLGNGDLKVKVSVSANKFSDSAREKITAAGGSINEV.

The interval 1–45 (MTIKLHHLRPAPGSKTERTRVGRGEGSKGKTAGRGTKGTKARKNV) is disordered. Residues 15–28 (KTERTRVGRGEGSK) show a composition bias toward basic and acidic residues.

This sequence belongs to the universal ribosomal protein uL15 family. In terms of assembly, part of the 50S ribosomal subunit.

In terms of biological role, binds to the 23S rRNA. This Mycobacteroides abscessus (strain ATCC 19977 / DSM 44196 / CCUG 20993 / CIP 104536 / JCM 13569 / NCTC 13031 / TMC 1543 / L948) (Mycobacterium abscessus) protein is Large ribosomal subunit protein uL15.